We begin with the raw amino-acid sequence, 66 residues long: UPF0337 protein SpyM3_1723 (66 aa).

Basic and acidic residues predominate over residues 1–10 (MSEEKLKSKI). The tract at residues 1–23 (MSEEKLKSKIEQASGGLKEGAGK) is disordered.

This sequence belongs to the UPF0337 (CsbD) family.

The sequence is that of UPF0337 protein SpyM3_1723 from Streptococcus pyogenes serotype M3 (strain ATCC BAA-595 / MGAS315).